The primary structure comprises 352 residues: UDP-N-acetylglucosamine--N-acetylmuramyl-(pentapeptide) pyrophosphoryl-undecaprenol N-acetylglucosamine transferase 2 (352 aa).

UDP-N-acetyl-alpha-D-glucosamine-binding positions include S11–G13, R164, S194, and Q289.

The protein belongs to the glycosyltransferase 28 family. MurG subfamily.

It is found in the cell membrane. The enzyme catalyses di-trans,octa-cis-undecaprenyl diphospho-N-acetyl-alpha-D-muramoyl-L-alanyl-D-glutamyl-meso-2,6-diaminopimeloyl-D-alanyl-D-alanine + UDP-N-acetyl-alpha-D-glucosamine = di-trans,octa-cis-undecaprenyl diphospho-[N-acetyl-alpha-D-glucosaminyl-(1-&gt;4)]-N-acetyl-alpha-D-muramoyl-L-alanyl-D-glutamyl-meso-2,6-diaminopimeloyl-D-alanyl-D-alanine + UDP + H(+). The protein operates within cell wall biogenesis; peptidoglycan biosynthesis. Functionally, cell wall formation. Catalyzes the transfer of a GlcNAc subunit on undecaprenyl-pyrophosphoryl-MurNAc-pentapeptide (lipid intermediate I) to form undecaprenyl-pyrophosphoryl-MurNAc-(pentapeptide)GlcNAc (lipid intermediate II). This is UDP-N-acetylglucosamine--N-acetylmuramyl-(pentapeptide) pyrophosphoryl-undecaprenol N-acetylglucosamine transferase 2 from Bacillus thuringiensis subsp. konkukian (strain 97-27).